The chain runs to 348 residues: Phosphate acyltransferase (348 aa).

Belongs to the PlsX family. In terms of assembly, homodimer. Probably interacts with PlsY.

The protein localises to the cytoplasm. It catalyses the reaction a fatty acyl-[ACP] + phosphate = an acyl phosphate + holo-[ACP]. It participates in lipid metabolism; phospholipid metabolism. Its function is as follows. Catalyzes the reversible formation of acyl-phosphate (acyl-PO(4)) from acyl-[acyl-carrier-protein] (acyl-ACP). This enzyme utilizes acyl-ACP as fatty acyl donor, but not acyl-CoA. The protein is Phosphate acyltransferase of Pectobacterium carotovorum subsp. carotovorum (strain PC1).